Here is a 113-residue protein sequence, read N- to C-terminus: Protein FPV195 (113 aa).

Belongs to the poxviruses A31 family.

The chain is Protein FPV195 from Vertebrata (FPV).